The following is an 859-amino-acid chain: MATNGHFASIGNSASDTTAYEHGVQVIDENKEFNPNLSQYLSLENVTPSGFNYHLISVFGSQSTGKSTLLNHLFGTHFSVMSELERRQTTKGIWMSKNKNESSSMASNILVMDVEGTDGRERGEDQDFERKSALFALATSEVLIVNIWEHQVGLYQGANMGLLKTVFEVNLQLFLKDKNTTHRSLLFFVIRDYSGMTPLQNLQKTLMEDMARLWDSISKPGGLENSNVHDYFDFQFYGLPHKGYQPEKFVEETQKLSLRFCDGQRDPNLDARKGEFSDGGVFLPEYHRRIPADGFSRYAEGIWDQIVNNKDLDLPTQQELLAQFRCDEILREVMVAFDETIVPFEDKQSQAARLGEPEILGGLGAAMRSSRTKAVKAFESEASRYHKGVYQRKRAELESKADTRLKTLFQGQLNAAHKSGISEFSEAVTAAVKSGQKKGTGYDFAEIVNEEAKKAVDKFEEVARATVVDGTSWSDYKQELALYEKELAEVSARLRRDEMRRLASRVERWVQSRLGESVGLEFNALGSGRAGGGAPEKGDQPTEKKFWDRVWNVFVETVLDAERRFTDRASSFDASLEEVDVGLWRLRRKSWGVLRAKIDEEMIEGNLLLKLRENFEDKFRYDDAGVPRIWRPTDDIEGIYTRARESTLTLIPLLSKFRLDETSAPPPLDRWIGHTPSSATSADEEDLAPIGGVDEEEGKSLEEEMTIVSDAKRQELTVRFKKAADGVYVEAKRSAIGGMTQVPLYFYGLLLALGWNEIIAVLRNPAYFFLLFVCAVGAYITYQLNLWGPIIKMTEAASNQAVTEGKKRLREFLESSDTGRQAIAMSTPGGSGRGGEEHEMSRLNQQGKSAAADEDVDDL.

The Cytoplasmic portion of the chain corresponds to 1 to 741; that stretch reads MATNGHFASI…KRSAIGGMTQ (741 aa). The GB1/RHD3-type G domain occupies 50–299; it reads GFNYHLISVF…IPADGFSRYA (250 aa). 60-67 serves as a coordination point for GTP; the sequence is GSQSTGKS. A coiled-coil region spans residues 442-500; the sequence is YDFAEIVNEEAKKAVDKFEEVARATVVDGTSWSDYKQELALYEKELAEVSARLRRDEMR. Residues 742–762 form a helical membrane-spanning segment; sequence VPLYFYGLLLALGWNEIIAVL. Topologically, residues 763-765 are lumenal; it reads RNP. Residues 766–786 form a helical membrane-spanning segment; the sequence is AYFFLLFVCAVGAYITYQLNL. The Cytoplasmic portion of the chain corresponds to 787 to 859; the sequence is WGPIIKMTEA…AAADEDVDDL (73 aa). The segment at 817-859 is disordered; that stretch reads DTGRQAIAMSTPGGSGRGGEEHEMSRLNQQGKSAAADEDVDDL.

This sequence belongs to the TRAFAC class dynamin-like GTPase superfamily. GB1/RHD3 GTPase family. RHD3 subfamily.

It is found in the endoplasmic reticulum membrane. Its function is as follows. Cooperates with the reticulon proteins and tubule-shaping DP1 family proteins to generate and maintain the structure of the tubular endoplasmic reticulum network. Has GTPase activity, which is required for its function in ER organization. This is Protein sey1 (sey1) from Aspergillus flavus (strain ATCC 200026 / FGSC A1120 / IAM 13836 / NRRL 3357 / JCM 12722 / SRRC 167).